The sequence spans 724 residues: Outer spore wall protein 2 (724 aa).

Disordered stretches follow at residues 407–427 (NSGQ…KNRV) and 477–497 (TSGG…YDDK).

Its subcellular location is the cytoplasm. The protein localises to the prospore membrane. May be involved in a late step of spore wall assembly. This Saccharomyces cerevisiae (strain ATCC 204508 / S288c) (Baker's yeast) protein is Outer spore wall protein 2 (OSW2).